A 434-amino-acid polypeptide reads, in one-letter code: D-amino acid dehydrogenase (434 aa).

An FAD-binding site is contributed by 3 to 17; the sequence is VVILGSGVVGVASAW.

Belongs to the DadA oxidoreductase family. FAD serves as cofactor.

The enzyme catalyses a D-alpha-amino acid + A + H2O = a 2-oxocarboxylate + AH2 + NH4(+). It participates in amino-acid degradation; D-alanine degradation; NH(3) and pyruvate from D-alanine: step 1/1. Functionally, oxidative deamination of D-amino acids. The chain is D-amino acid dehydrogenase from Yersinia enterocolitica serotype O:8 / biotype 1B (strain NCTC 13174 / 8081).